We begin with the raw amino-acid sequence, 776 residues long: Mitochondrial intermediate peptidase (776 aa).

The N-terminal 28 residues, 1 to 28, are a transit peptide targeting the mitochondrion; the sequence is MFVRFYKRLDRQYIQSQRRWILSSNKCL. The segment at 48 to 71 is disordered; the sequence is DHWEESQAQNTSSEQDNKGKNSSY. Polar residues predominate over residues 53 to 71; the sequence is SQAQNTSSEQDNKGKNSSY. Residue His567 participates in Zn(2+) binding. The active site involves Glu568. Residues His571 and His574 each contribute to the Zn(2+) site.

This sequence belongs to the peptidase M3 family. Zn(2+) is required as a cofactor.

Its subcellular location is the mitochondrion matrix. It carries out the reaction Release of an N-terminal octapeptide as second stage of processing of some proteins imported into the mitochondrion.. Cleaves proteins, imported into the mitochondrion, to their mature size. While most mitochondrial precursor proteins are processed to the mature form in one step by mitochondrial processing peptidase (MPP), the sequential cleavage by MIP of an octapeptide after initial processing by MPP is a required step for a subgroup of nuclear-encoded precursor proteins destined for the matrix or the inner membrane. The chain is Mitochondrial intermediate peptidase (OCT1) from Eremothecium gossypii (strain ATCC 10895 / CBS 109.51 / FGSC 9923 / NRRL Y-1056) (Yeast).